Here is a 148-residue protein sequence, read N- to C-terminus: Putative pre-16S rRNA nuclease (148 aa).

The protein belongs to the YqgF nuclease family.

Its subcellular location is the cytoplasm. In terms of biological role, could be a nuclease involved in processing of the 5'-end of pre-16S rRNA. The sequence is that of Putative pre-16S rRNA nuclease from Chlamydia trachomatis serovar L2 (strain ATCC VR-902B / DSM 19102 / 434/Bu).